A 312-amino-acid polypeptide reads, in one-letter code: sn-1-specific diacylglycerol lipase ABHD11 (312 aa).

Residues 1–14 (MITFKSFHCSRGWH) constitute a mitochondrion transit peptide. In terms of domain architecture, AB hydrolase-1 spans 62–297 (PPLVLLHGLF…GAGHWVHADK (236 aa)). Active-site charge relay system residues include Ser-136, Glu-232, and His-291.

This sequence belongs to the AB hydrolase superfamily. Post-translationally, phosphorylated.

Its subcellular location is the mitochondrion. It is found in the mitochondrion matrix. The catalysed reaction is 1-octadecanoyl-2-(5Z,8Z,11Z,14Z-eicosatetraenoyl)-sn-glycerol + H2O = 2-(5Z,8Z,11Z,14Z-eicosatetraenoyl)-glycerol + octadecanoate + H(+). It catalyses the reaction a 1,2-diacyl-sn-glycerol + H2O = a 2-acylglycerol + a fatty acid + H(+). It carries out the reaction a 1,3-diacyl-sn-glycerol + H2O = a 1-acyl-sn-glycerol + a fatty acid + H(+). The enzyme catalyses 1-octadecanoyl-2-(9Z-octadecenoyl)-sn-glycerol + H2O = 2-(9Z-octadecenoyl)-glycerol + octadecanoate + H(+). The catalysed reaction is 1-octadecanoyl-2-(4Z,7Z,10Z,13Z,16Z,19Z-docosahexaenoyl)-sn-glycerol + H2O = 2-(4Z,7Z,10Z,13Z,16Z,19Z-docosahexaenoyl)-glycerol + octadecanoate + H(+). It catalyses the reaction 1,2-didecanoylglycerol + H2O = decanoylglycerol + decanoate + H(+). In terms of biological role, catalyzes the hydrolysis of diacylglycerol in vitro and may function as a key regulator in lipid metabolism, namely by regulating the intracellular levels of diacylglycerol. 1,2-diacyl-sn-glycerols are the preferred substrate over 1,3-diacyl-sn-glycerols. The enzyme hydrolyzes stearate in preference to palmitate from the sn-1 position of 1,2-diacyl-sn-glycerols. This Xenopus laevis (African clawed frog) protein is sn-1-specific diacylglycerol lipase ABHD11.